The primary structure comprises 453 residues: Ethanolamine ammonia-lyase large subunit (453 aa).

Residues arginine 160–glutamine 162 and asparagine 193 each bind substrate. Adenosylcob(III)alamin-binding residues include proline 194 and glutamine 246. A substrate-binding site is contributed by glutamate 287. Residue serine 295 coordinates adenosylcob(III)alamin. Substrate is bound at residue aspartate 362. Residue methionine 401 coordinates adenosylcob(III)alamin.

It belongs to the EutB family. The basic unit is a heterodimer which dimerizes to form tetramers. The heterotetramers trimerize; 6 large subunits form a core ring with 6 small subunits projecting outwards. Adenosylcob(III)alamin is required as a cofactor.

It localises to the bacterial microcompartment. It carries out the reaction ethanolamine = acetaldehyde + NH4(+). The protein operates within amine and polyamine degradation; ethanolamine degradation. Functionally, catalyzes the deamination of various vicinal amino-alcohols to oxo compounds. It is spontaneously inactivated by its substrate and reactivated by EutA. May play a role in BMC assembly or maintenance. In terms of biological role, expression of the eut operon allows this bacteria to use ethanolamine (EA) as a carbon, nitrogen and energy source. It relies on cobalamin (vitamin B12) both as a cofactor for the ethanolamine ammonia-lyase activity and to induce the operon. EA enhances bacterial survival in macrophages in a concentration-dependent manner, suggesting it is an important nutrient during infection. This is Ethanolamine ammonia-lyase large subunit from Salmonella typhimurium (strain LT2 / SGSC1412 / ATCC 700720).